We begin with the raw amino-acid sequence, 220 residues long: Deoxyribose-phosphate aldolase (220 aa).

Residue D89 is the Proton donor/acceptor of the active site. K151 (schiff-base intermediate with acetaldehyde) is an active-site residue. K180 functions as the Proton donor/acceptor in the catalytic mechanism.

This sequence belongs to the DeoC/FbaB aldolase family. DeoC type 1 subfamily.

It is found in the cytoplasm. It catalyses the reaction 2-deoxy-D-ribose 5-phosphate = D-glyceraldehyde 3-phosphate + acetaldehyde. Its pathway is carbohydrate degradation; 2-deoxy-D-ribose 1-phosphate degradation; D-glyceraldehyde 3-phosphate and acetaldehyde from 2-deoxy-alpha-D-ribose 1-phosphate: step 2/2. Its function is as follows. Catalyzes a reversible aldol reaction between acetaldehyde and D-glyceraldehyde 3-phosphate to generate 2-deoxy-D-ribose 5-phosphate. This Staphylococcus carnosus (strain TM300) protein is Deoxyribose-phosphate aldolase.